The following is a 507-amino-acid chain: Cytochrome P450 4A14 (507 aa).

A propeptide spans 1 to 4 (MGFS) (removed in mature form). Residue glutamate 318 participates in heme binding. Serine 437 carries the phosphoserine modification. Position 454 (cysteine 454) interacts with heme.

Belongs to the cytochrome P450 family. It depends on heme as a cofactor.

Its subcellular location is the endoplasmic reticulum membrane. It localises to the microsome membrane. It catalyses the reaction an omega-methyl-long-chain fatty acid + reduced [NADPH--hemoprotein reductase] + O2 = an omega-hydroxy-long-chain fatty acid + oxidized [NADPH--hemoprotein reductase] + H2O + H(+). It carries out the reaction dodecanoate + reduced [NADPH--hemoprotein reductase] + O2 = (11R)-hydroxydodecanoate + oxidized [NADPH--hemoprotein reductase] + H2O + H(+). The catalysed reaction is dodecanoate + reduced [NADPH--hemoprotein reductase] + O2 = 12-hydroxydodecanoate + oxidized [NADPH--hemoprotein reductase] + H2O + H(+). The enzyme catalyses tetradecanoate + reduced [NADPH--hemoprotein reductase] + O2 = 14-hydroxytetradecanoate + oxidized [NADPH--hemoprotein reductase] + H2O + H(+). It functions in the pathway lipid metabolism; fatty acid metabolism. In terms of biological role, a cytochrome P450 monooxygenase that catalyzes omega and omega-1 hydroxylation of saturated fatty acids. Exhibits preferential omega versus omega-1 regioselectivity and (R) versus (S) stereoselectivity for hydroxylation of dodecanoic (lauric) acid. Mechanistically, uses molecular oxygen inserting one oxygen atom into a substrate, and reducing the second into a water molecule, with two electrons provided by NADPH via cytochrome P450 reductase (CPR; NADPH-ferrihemoprotein reductase). This Rattus norvegicus (Rat) protein is Cytochrome P450 4A14.